The primary structure comprises 361 residues: DNA replication and repair protein RecF (361 aa).

Glycine 30–threonine 37 contributes to the ATP binding site.

Belongs to the RecF family.

The protein resides in the cytoplasm. Its function is as follows. The RecF protein is involved in DNA metabolism; it is required for DNA replication and normal SOS inducibility. RecF binds preferentially to single-stranded, linear DNA. It also seems to bind ATP. This Yersinia enterocolitica serotype O:8 / biotype 1B (strain NCTC 13174 / 8081) protein is DNA replication and repair protein RecF.